A 140-amino-acid chain; its full sequence is Nucleoside diphosphate kinase (140 aa).

Positions 11, 59, 87, 93, 104, and 114 each coordinate ATP. The active-site Pros-phosphohistidine intermediate is the H117.

It belongs to the NDK family. As to quaternary structure, homotetramer. Mg(2+) serves as cofactor.

It localises to the cytoplasm. It catalyses the reaction a 2'-deoxyribonucleoside 5'-diphosphate + ATP = a 2'-deoxyribonucleoside 5'-triphosphate + ADP. It carries out the reaction a ribonucleoside 5'-diphosphate + ATP = a ribonucleoside 5'-triphosphate + ADP. Its function is as follows. Major role in the synthesis of nucleoside triphosphates other than ATP. The ATP gamma phosphate is transferred to the NDP beta phosphate via a ping-pong mechanism, using a phosphorylated active-site intermediate. In Brucella canis (strain ATCC 23365 / NCTC 10854 / RM-666), this protein is Nucleoside diphosphate kinase.